Reading from the N-terminus, the 390-residue chain is 8-amino-7-oxononanoate synthase (390 aa).

Position 19 (Arg19) interacts with substrate. Residue 106–107 (GY) coordinates pyridoxal 5'-phosphate. His131 contributes to the substrate binding site. Pyridoxal 5'-phosphate contacts are provided by Ser176, His204, and Thr233. Residue Lys236 is modified to N6-(pyridoxal phosphate)lysine. Substrate is bound at residue Thr350.

This sequence belongs to the class-II pyridoxal-phosphate-dependent aminotransferase family. BioF subfamily. As to quaternary structure, homodimer. Pyridoxal 5'-phosphate serves as cofactor.

The enzyme catalyses 6-carboxyhexanoyl-[ACP] + L-alanine + H(+) = (8S)-8-amino-7-oxononanoate + holo-[ACP] + CO2. It functions in the pathway cofactor biosynthesis; biotin biosynthesis. In terms of biological role, catalyzes the decarboxylative condensation of pimeloyl-[acyl-carrier protein] and L-alanine to produce 8-amino-7-oxononanoate (AON), [acyl-carrier protein], and carbon dioxide. The polypeptide is 8-amino-7-oxononanoate synthase (Pseudomonas entomophila (strain L48)).